We begin with the raw amino-acid sequence, 406 residues long: Fosmidomycin resistance protein (406 aa).

The Periplasmic segment spans residues 1 to 42 (MAMSEQPQPVAGAAASTTKARTSFGILGAISLSHLLNDMIQS). A run of 2 helical transmembrane segments spans residues 43-63 (LILA…MQIG) and 64-84 (MITL…GYWT). Residues 85–102 (DKYPMPWSLPIGMCFTLS) are Periplasmic-facing. A helical transmembrane segment spans residues 103–123 (GLVLLALAGSFGAVLLAAALV). The Cytoplasmic segment spans residues 124–151 (GTGSSVFHPESSRVARMASGGRHGLAQS). Residues 152-172 (IFQVGGNFGSSLGPLLAAVII) traverse the membrane as a helical segment. At 173–177 (APYGK) the chain is on the periplasmic side. A helical transmembrane segment spans residues 178–198 (GNVAWFVLAALLAIVVLAQIS). Topologically, residues 199–225 (RWYSAQHRMNKGKPKATIINPLPRNKV) are cytoplasmic. The chain crosses the membrane as a helical span at residues 226–246 (VLAVSILLILIFSKYFYMASI). Topologically, residues 247-266 (SSYYTFYLMQKFGLSIQNAQ) are periplasmic. The helical transmembrane segment at 267–287 (LHLFAFLFAVAAGTVIGGPVG) threads the bilayer. Over 288–294 (DKIGRKY) the chain is Cytoplasmic. The helical transmembrane segment at 295–315 (VIWGSILGVAPFTLILPYASL) threads the bilayer. At 316 to 319 (HWTG) the chain is on the periplasmic side. The chain crosses the membrane as a helical span at residues 320-340 (VLTVIIGFILASAFSAILVYA). The Cytoplasmic segment spans residues 341-353 (QELLPGRIGMVSG). The helical transmembrane segment at 354 to 374 (LFFGFAFGMGGLGAAVLGLIA) threads the bilayer. Topologically, residues 375-378 (DHTS) are periplasmic. The chain crosses the membrane as a helical span at residues 379–399 (IELVYKICAFLPLLGMLTIFL). The Cytoplasmic portion of the chain corresponds to 400–406 (PDNRHKD).

Belongs to the major facilitator superfamily.

The protein localises to the cell inner membrane. Its function is as follows. Confers the resistance against fosmidomycin. The protein is Fosmidomycin resistance protein (fsr) of Escherichia coli (strain K12).